The sequence spans 714 residues: Fatty acid oxidation complex subunit alpha (714 aa).

The tract at residues 1 to 190 (MEMASAFTLN…KLGLVDDVVP (190 aa)) is enoyl-CoA hydratase. The tract at residues 306-714 (APLNSVGILG…FWKTTATDLQ (409 aa)) is 3-hydroxyacyl-CoA dehydrogenase.

This sequence in the N-terminal section; belongs to the enoyl-CoA hydratase/isomerase family. It in the central section; belongs to the 3-hydroxyacyl-CoA dehydrogenase family. In terms of assembly, heterotetramer of two alpha chains (FadJ) and two beta chains (FadI).

The protein resides in the cytoplasm. It carries out the reaction a (3S)-3-hydroxyacyl-CoA = a (2E)-enoyl-CoA + H2O. The enzyme catalyses a 4-saturated-(3S)-3-hydroxyacyl-CoA = a (3E)-enoyl-CoA + H2O. It catalyses the reaction a (3S)-3-hydroxyacyl-CoA + NAD(+) = a 3-oxoacyl-CoA + NADH + H(+). The catalysed reaction is (3S)-3-hydroxybutanoyl-CoA = (3R)-3-hydroxybutanoyl-CoA. It functions in the pathway lipid metabolism; fatty acid beta-oxidation. Catalyzes the formation of a hydroxyacyl-CoA by addition of water on enoyl-CoA. Also exhibits 3-hydroxyacyl-CoA epimerase and 3-hydroxyacyl-CoA dehydrogenase activities. The chain is Fatty acid oxidation complex subunit alpha from Escherichia coli O17:K52:H18 (strain UMN026 / ExPEC).